Here is a 77-residue protein sequence, read N- to C-terminus: Envelope protein US9 homolog (77 aa).

The Di-leucine internalization motif signature appears at 12–13; it reads LL.

Belongs to the alphaherpesvirinae envelope protein US9 family.

The sequence is that of Envelope protein US9 homolog from Chlorocebus aethiops (Green monkey).